Consider the following 351-residue polypeptide: Phosphoribosylformylglycinamidine cyclo-ligase (351 aa).

It belongs to the AIR synthase family.

It is found in the cytoplasm. The catalysed reaction is 2-formamido-N(1)-(5-O-phospho-beta-D-ribosyl)acetamidine + ATP = 5-amino-1-(5-phospho-beta-D-ribosyl)imidazole + ADP + phosphate + H(+). It participates in purine metabolism; IMP biosynthesis via de novo pathway; 5-amino-1-(5-phospho-D-ribosyl)imidazole from N(2)-formyl-N(1)-(5-phospho-D-ribosyl)glycinamide: step 2/2. The protein is Phosphoribosylformylglycinamidine cyclo-ligase of Burkholderia vietnamiensis (strain G4 / LMG 22486) (Burkholderia cepacia (strain R1808)).